Consider the following 234-residue polypeptide: Large ribosomal subunit protein uL1 (234 aa).

It belongs to the universal ribosomal protein uL1 family. In terms of assembly, part of the 50S ribosomal subunit.

Functionally, binds directly to 23S rRNA. The L1 stalk is quite mobile in the ribosome, and is involved in E site tRNA release. In terms of biological role, protein L1 is also a translational repressor protein, it controls the translation of the L11 operon by binding to its mRNA. The chain is Large ribosomal subunit protein uL1 from Bartonella tribocorum (strain CIP 105476 / IBS 506).